The primary structure comprises 1437 residues: MMDTSKDDDMEIASSSGSRRYDVFPSFRGEDVRDSFLSHLLKELRGKAITFIDDEIERSRSIGPELLSAIKESRIAIVIFSKNYASSTWCLNELVEIHKCYTNLNQMVIPIFFHVDASEVKKQTGEFGKVFEETCKAKSEDEKQSWKQALAAVAVMAGYDLRKWPSEAAMIEELAEDVLRKTMTPSDDFGDLVGIENHIEAIKSVLCLESKEARIMVGIWGQSGIGKSTIGRALYSKLSIQFHHRAFITYKSTSGSDVSGMKLRWEKELLSEILGQKDIKIEHFGVVEQRLKQQKVLILLDDVDSLEFLKTLVGKAEWFGSGSRIIVITQDRQLLKAHEIDLIYEVEFPSEHLALTMLCRSAFGKDSPPDDFKELAFEVAKLAGNLPLGLSVLGSSLKGRTKEWWMEMMPRLRNGLNGDIMKTLRVSYDRLHQKDQDMFLYIACLFNGFEVSYVKDLLKDNVGFTMLTEKSLIRITPDGYIEMHNLLEKLGREIDRAKSKGNPGKRRFLTNFEDIHEVVTEKTGTETLLGIRLPFEEYFSTRPLLIDKESFKGMRNLQYLEIGYYGDLPQSLVYLPLKLRLLDWDDCPLKSLPSTFKAEYLVNLIMKYSKLEKLWEGTLPLGSLKEMNLRYSNNLKEIPDLSLAINLEELDLVGCKSLVTLPSSIQNATKLIYLDMSDCKKLESFPTDLNLESLEYLNLTGCPNLRNFPAIKMGCSDVDFPEGRNEIVVEDCFWNKNLPAGLDYLDCLTRCMPCEFRPEQLAFLNVRGYKHEKLWEGIQSLGSLEGMDLSESENLTEIPDLSKATKLESLILNNCKSLVTLPSTIGNLHRLVRLEMKECTGLEVLPTDVNLSSLETLDLSGCSSLRSFPLISTNIVWLYLENTAIEEIPSTIGNLHRLVRLEMKKCTGLEVLPTDVNLSSLETLDLSGCSSLRSFPLISESIKWLYLENTAIEEIPDLSKATNLKNLKLNNCKSLVTLPTTIGNLQKLVSFEMKECTGLEVLPIDVNLSSLMILDLSGCSSLRTFPLISTNIVWLYLENTAIEEIPSTIGNLHRLVKLEMKECTGLEVLPTDVNLSSLMILDLSGCSSLRTFPLISTRIECLYLQNTAIEEVPCCIEDFTRLTVLMMYCCQRLKTISPNIFRLTRLELADFTDCRGVIKALSDATVVATMEDHVSCVPLSENIEYIWDKLYRVAYLQEHFSFRNCFKLDRDARELILRSCFKPVALPGEEIPKYFTYRAYGDSLTVIVPQSSLSQNFLRFKACVVVEPLSKGKGFYPFLKVNVGFNGKQYQKSFSKDAELELCKTDHLFFCSFKFRSEDLPSKLNFNDVEFKFCCSNRIKECGVRLMYVSQEENNQQTTRSEKRMRMTSGTSEEDINLPYGLIVADTGLAALNMELSLGQGEPSSSTSLEGEALCVDYMITEEQDKGIPILFPVSGN.

Residue M1 is modified to N-acetylmethionine. One can recognise a TIR domain in the interval R19 to T182. Position 28–33 (R28–R33) interacts with NAD(+). E93 is an active-site residue. LRR repeat units follow at residues M554–P576, L577–A598, Y600–L621, G622–I645, L647–A668, K670–L691, E692–C715, L781–T805, L807–L828, H829–L851, S852–I875, W877–L895, R897–L918, S919–S939, E940–T962, L964–L985, S1009–S1029, T1030–L1052, R1054–L1075, S1076–S1096, T1097–R1121, T1123–L1143, and L1161–Y1185.

The protein belongs to the disease resistance TIR-NB-LRR family. Homodimer. Interacts (via TIR domain) with TPR1. Interacts with EDS1. Interacts with SRFR1. Interacts with HSP90-3. Binds to MORC1/CRT1. Interacts with TRAF1B. In terms of processing, met-1 is specifically acetylated by N-terminal acetyltransferase complex A (NatA). The NatA-mediated acetylation serves as a degradation signal. Post-translationally, met-1 is specifically acetylated by N-terminal acetyltransferase complex B (NatB). The NatB-mediated acetylation stabilizes SNC1. Expressed in guard cells and epidermal cells, but not detected in mesophyll cells.

The protein resides in the cytoplasm. It is found in the microsome. The protein localises to the nucleus. The catalysed reaction is NAD(+) + H2O = ADP-D-ribose + nicotinamide + H(+). In terms of biological role, disease resistance protein of the TIR-NB-LRR-type. Part of the RPP5 locus that contains a cluster of several paralogous disease resistance (R) genes. Resistance proteins guard the plant against pathogens that contain an appropriate avirulence protein via an indirect interaction with this avirulence protein. That triggers a defense system including the hypersensitive response, which restricts the pathogen growth. Probably acts as a NAD(+) hydrolase (NADase): in response to activation, catalyzes cleavage of NAD(+) into ADP-D-ribose (ADPR) and nicotinamide; NAD(+) cleavage triggering a defense system that promotes cell death. Expression regulated by MOS1 at chromatin level. Nuclear localization of SNC1 is essential for its activity. ABA deficiency can rescue high-temperature inhibition of SNC1-mediated defense responses. The polypeptide is Protein SUPPRESSOR OF npr1-1, CONSTITUTIVE 1 (Arabidopsis thaliana (Mouse-ear cress)).